The primary structure comprises 358 residues: Membrane-bound lytic murein transglycosylase C (358 aa).

The signal sequence occupies residues 1-19 (MKITLKKLLILAIVPFLYA). Cys-20 carries N-palmitoyl cysteine lipidation. The S-diacylglycerol cysteine moiety is linked to residue Cys-20.

Belongs to the transglycosylase Slt family.

It localises to the cell outer membrane. The enzyme catalyses Exolytic cleavage of the (1-&gt;4)-beta-glycosidic linkage between N-acetylmuramic acid (MurNAc) and N-acetylglucosamine (GlcNAc) residues in peptidoglycan, from either the reducing or the non-reducing ends of the peptidoglycan chains, with concomitant formation of a 1,6-anhydrobond in the MurNAc residue.. Functionally, murein-degrading enzyme. May play a role in recycling of muropeptides during cell elongation and/or cell division. This is Membrane-bound lytic murein transglycosylase C from Actinobacillus succinogenes (strain ATCC 55618 / DSM 22257 / CCUG 43843 / 130Z).